Here is a 65-residue protein sequence, read N- to C-terminus: Small ribosomal subunit protein eS27 (65 aa).

4 residues coordinate Zn(2+): Cys20, Cys23, Cys39, and Cys42. A C4-type zinc finger spans residues 20–42; it reads CIDCGNEQIVFSHPATRVRCLVC.

It belongs to the eukaryotic ribosomal protein eS27 family. In terms of assembly, part of the 30S ribosomal subunit. The cofactor is Zn(2+).

In Pyrococcus horikoshii (strain ATCC 700860 / DSM 12428 / JCM 9974 / NBRC 100139 / OT-3), this protein is Small ribosomal subunit protein eS27.